Reading from the N-terminus, the 780-residue chain is Probable trehalase (780 aa).

Residues 1–48 form a disordered region; that stretch reads MVDFLPKVTEINPPSEGNDGEDNIKPLSSGSEQRPLKEEGQQGGRRHH. S52 and S53 each carry phosphoserine. T88 is subject to Phosphothreonine. Residue S112 is modified to Phosphoserine. Substrate-binding positions include R331, 338-339, N375, R384, 384-386, and G505; these read WD and RSQ. Catalysis depends on proton donor/acceptor residues D507 and E703.

It belongs to the glycosyl hydrolase 37 family.

The catalysed reaction is alpha,alpha-trehalose + H2O = alpha-D-glucose + beta-D-glucose. This is Probable trehalase (NTH2) from Saccharomyces cerevisiae (strain ATCC 204508 / S288c) (Baker's yeast).